A 404-amino-acid polypeptide reads, in one-letter code: Cysteine desulfurase IscS (404 aa).

Pyridoxal 5'-phosphate-binding positions include 75–76 (AT), Asn155, Gln183, and 203–205 (SSH). Lys206 carries the N6-(pyridoxal phosphate)lysine modification. Thr243 contributes to the pyridoxal 5'-phosphate binding site. Residue Cys328 is the Cysteine persulfide intermediate of the active site. Cys328 lines the [2Fe-2S] cluster pocket.

This sequence belongs to the class-V pyridoxal-phosphate-dependent aminotransferase family. NifS/IscS subfamily. As to quaternary structure, homodimer. Forms a heterotetramer with IscU, interacts with other sulfur acceptors. Requires pyridoxal 5'-phosphate as cofactor.

The protein localises to the cytoplasm. The catalysed reaction is (sulfur carrier)-H + L-cysteine = (sulfur carrier)-SH + L-alanine. The protein operates within cofactor biosynthesis; iron-sulfur cluster biosynthesis. Master enzyme that delivers sulfur to a number of partners involved in Fe-S cluster assembly, tRNA modification or cofactor biosynthesis. Catalyzes the removal of elemental sulfur atoms from cysteine to produce alanine. Functions as a sulfur delivery protein for Fe-S cluster synthesis onto IscU, an Fe-S scaffold assembly protein, as well as other S acceptor proteins. This Haemophilus influenzae (strain PittGG) protein is Cysteine desulfurase IscS.